Here is a 199-residue protein sequence, read N- to C-terminus: Recombination protein RecR (199 aa).

Residues 58-73 form a C4-type zinc finger; it reads CSVCTNLTDRDPCRIC. The Toprim domain occupies 81 to 176; sequence AVICVVEEPR…KVTRIAHGLP (96 aa).

It belongs to the RecR family.

Its function is as follows. May play a role in DNA repair. It seems to be involved in an RecBC-independent recombinational process of DNA repair. It may act with RecF and RecO. The chain is Recombination protein RecR from Heliobacterium modesticaldum (strain ATCC 51547 / Ice1).